Consider the following 184-residue polypeptide: Photosystem I assembly protein Ycf4 (184 aa).

Helical transmembrane passes span 22-42 and 57-77; these read FFWACILFLGSLGFLLVGTSS and ILFFPQGIVMSFYGIAGLFIS.

It belongs to the Ycf4 family.

It is found in the plastid. The protein localises to the chloroplast thylakoid membrane. In terms of biological role, seems to be required for the assembly of the photosystem I complex. This is Photosystem I assembly protein Ycf4 from Nandina domestica (Heavenly bamboo).